The following is a 171-amino-acid chain: S-ribosylhomocysteine lyase (171 aa).

Fe cation-binding residues include His54, His58, and Cys128.

It belongs to the LuxS family. In terms of assembly, homodimer. It depends on Fe cation as a cofactor.

It catalyses the reaction S-(5-deoxy-D-ribos-5-yl)-L-homocysteine = (S)-4,5-dihydroxypentane-2,3-dione + L-homocysteine. In terms of biological role, involved in the synthesis of autoinducer 2 (AI-2) which is secreted by bacteria and is used to communicate both the cell density and the metabolic potential of the environment. The regulation of gene expression in response to changes in cell density is called quorum sensing. Catalyzes the transformation of S-ribosylhomocysteine (RHC) to homocysteine (HC) and 4,5-dihydroxy-2,3-pentadione (DPD). This is S-ribosylhomocysteine lyase from Yersinia pseudotuberculosis serotype O:1b (strain IP 31758).